We begin with the raw amino-acid sequence, 536 residues long: Xylulose kinase (536 aa).

4 residues coordinate substrate: histidine 99, arginine 170, aspartate 280, and asparagine 281. ATP-binding positions include tryptophan 355, 441–442 (GA), and asparagine 445.

This sequence belongs to the FGGY kinase family. As to quaternary structure, monomer.

It catalyses the reaction D-xylulose + ATP = D-xylulose 5-phosphate + ADP + H(+). Functionally, phosphorylates D-xylulose to produce D-xylulose 5-phosphate, a molecule that may play an important role in the regulation of glucose metabolism and lipogenesis. The sequence is that of Xylulose kinase (XYLB) from Homo sapiens (Human).